We begin with the raw amino-acid sequence, 432 residues long: Glutamate-1-semialdehyde 2,1-aminomutase (432 aa).

Residue Lys-267 is modified to N6-(pyridoxal phosphate)lysine.

It belongs to the class-III pyridoxal-phosphate-dependent aminotransferase family. HemL subfamily. As to quaternary structure, homodimer. Pyridoxal 5'-phosphate is required as a cofactor.

Its subcellular location is the cytoplasm. It catalyses the reaction (S)-4-amino-5-oxopentanoate = 5-aminolevulinate. Its pathway is porphyrin-containing compound metabolism; protoporphyrin-IX biosynthesis; 5-aminolevulinate from L-glutamyl-tRNA(Glu): step 2/2. The polypeptide is Glutamate-1-semialdehyde 2,1-aminomutase (Syntrophus aciditrophicus (strain SB)).